We begin with the raw amino-acid sequence, 153 residues long: SKP1-like protein 9 (153 aa).

An interaction with the F-box domain of F-box proteins region spans residues 95 to 153 (IKAANYLNIKSLFDLACQTVAEIIKGNTPEQIREFFNIENDLTPEEEAAIRRENKWAFE).

This sequence belongs to the SKP1 family. In terms of assembly, part of a SCF (SKP1-cullin-F-box) protein ligase complex. Interacts with CPR1/CPR30 and At3g61590. In terms of tissue distribution, expressed in leaves, shoot apical meristem (SAM), roots, flowers and pollen.

The protein localises to the nucleus. It participates in protein modification; protein ubiquitination. Involved in ubiquitination and subsequent proteasomal degradation of target proteins. Together with CUL1, RBX1 and a F-box protein, it forms a SCF E3 ubiquitin ligase complex. The functional specificity of this complex depends on the type of F-box protein. In the SCF complex, it serves as an adapter that links the F-box protein to CUL1. In Arabidopsis thaliana (Mouse-ear cress), this protein is SKP1-like protein 9 (ASK9).